Here is a 460-residue protein sequence, read N- to C-terminus: Bifunctional protein GlmU (460 aa).

The tract at residues 1 to 229 is pyrophosphorylase; sequence MKNYAIILAA…FDESLGVNDR (229 aa). UDP-N-acetyl-alpha-D-glucosamine contacts are provided by residues 8 to 11, Lys-22, Gln-72, and 77 to 78; these read LAAG and GT. Asp-102 serves as a coordination point for Mg(2+). Gly-139, Glu-154, Asn-169, and Asn-227 together coordinate UDP-N-acetyl-alpha-D-glucosamine. A Mg(2+)-binding site is contributed by Asn-227. Positions 230–250 are linker; it reads LALAQAEVIMQERINKQHMLN. The tract at residues 251–460 is N-acetyltransferase; that stretch reads GVTLQNPAAT…RLPHHPDQPQ (210 aa). The UDP-N-acetyl-alpha-D-glucosamine site is built by Arg-332 and Lys-350. His-362 serves as the catalytic Proton acceptor. UDP-N-acetyl-alpha-D-glucosamine is bound by residues Tyr-365 and Asn-376. Acetyl-CoA-binding positions include Ala-379, 385-386, Ser-404, Ala-422, and Arg-439; that span reads NY.

This sequence in the N-terminal section; belongs to the N-acetylglucosamine-1-phosphate uridyltransferase family. It in the C-terminal section; belongs to the transferase hexapeptide repeat family. Homotrimer. Mg(2+) serves as cofactor.

The protein resides in the cytoplasm. The catalysed reaction is alpha-D-glucosamine 1-phosphate + acetyl-CoA = N-acetyl-alpha-D-glucosamine 1-phosphate + CoA + H(+). The enzyme catalyses N-acetyl-alpha-D-glucosamine 1-phosphate + UTP + H(+) = UDP-N-acetyl-alpha-D-glucosamine + diphosphate. The protein operates within nucleotide-sugar biosynthesis; UDP-N-acetyl-alpha-D-glucosamine biosynthesis; N-acetyl-alpha-D-glucosamine 1-phosphate from alpha-D-glucosamine 6-phosphate (route II): step 2/2. It participates in nucleotide-sugar biosynthesis; UDP-N-acetyl-alpha-D-glucosamine biosynthesis; UDP-N-acetyl-alpha-D-glucosamine from N-acetyl-alpha-D-glucosamine 1-phosphate: step 1/1. Its pathway is bacterial outer membrane biogenesis; LPS lipid A biosynthesis. In terms of biological role, catalyzes the last two sequential reactions in the de novo biosynthetic pathway for UDP-N-acetylglucosamine (UDP-GlcNAc). The C-terminal domain catalyzes the transfer of acetyl group from acetyl coenzyme A to glucosamine-1-phosphate (GlcN-1-P) to produce N-acetylglucosamine-1-phosphate (GlcNAc-1-P), which is converted into UDP-GlcNAc by the transfer of uridine 5-monophosphate (from uridine 5-triphosphate), a reaction catalyzed by the N-terminal domain. In Streptococcus equi subsp. zooepidemicus (strain ATCC 35246 / C74-63), this protein is Bifunctional protein GlmU.